The primary structure comprises 266 residues: Thymidylate synthase (266 aa).

Arg24 provides a ligand contact to dUMP. Position 54 (His54) interacts with (6R)-5,10-methylene-5,6,7,8-tetrahydrofolate. Residue 129–130 (RR) coordinates dUMP. Cys149 functions as the Nucleophile in the catalytic mechanism. DUMP is bound by residues 169 to 172 (RSAD), Asn180, and 210 to 212 (HIY). Asp172 lines the (6R)-5,10-methylene-5,6,7,8-tetrahydrofolate pocket. Ala265 contributes to the (6R)-5,10-methylene-5,6,7,8-tetrahydrofolate binding site.

The protein belongs to the thymidylate synthase family. Bacterial-type ThyA subfamily. Homodimer.

The protein localises to the cytoplasm. It catalyses the reaction dUMP + (6R)-5,10-methylene-5,6,7,8-tetrahydrofolate = 7,8-dihydrofolate + dTMP. It functions in the pathway pyrimidine metabolism; dTTP biosynthesis. Its function is as follows. Catalyzes the reductive methylation of 2'-deoxyuridine-5'-monophosphate (dUMP) to 2'-deoxythymidine-5'-monophosphate (dTMP) while utilizing 5,10-methylenetetrahydrofolate (mTHF) as the methyl donor and reductant in the reaction, yielding dihydrofolate (DHF) as a by-product. This enzymatic reaction provides an intracellular de novo source of dTMP, an essential precursor for DNA biosynthesis. The polypeptide is Thymidylate synthase (Mycobacterium sp. (strain KMS)).